A 205-amino-acid polypeptide reads, in one-letter code: Protein Nef (205 aa).

Residue glycine 2 is the site of N-myristoyl glycine; by host attachment. Serine 6 carries the phosphoserine; by host modification. The acidic; interacts with host PACS1 and PACS2; stabilizes the interaction of NEF/MHC-I with host AP1M1; necessary for MHC-I internalization stretch occupies residues 61–65 (EESEE). The segment at 69 to 78 (PVRPQVPLRP) is SH3-binding; interaction with Src family tyrosine kinases. The PxxP; stabilizes the interaction of NEF/MHC-I with host AP1M1; necessary for MHC-I internalization signature appears at 72 to 75 (PQVP). Positions 108–124 (EILDLWVYHTQGFFPDW) are mediates dimerization, Nef-PTE1 interaction. Residues 148–180 (VDPREVEEANTGENNCLLHPMSQHGMDDDEREV) are binding to ATP6V1H. The Dileucine internalization motif; necessary for CD4 internalization signature appears at 164-165 (LL). A Diacidic; necessary for CD4 internalization motif is present at residues 174–175 (DD).

It belongs to the lentivirus primate group Nef protein family. As to quaternary structure, monomer; cytosolic form. Homodimer; membrane bound form. Interacts with Nef associated p21-activated kinase (PAK2); this interaction activates PAK2. Associates with the Nef-MHC-I-AP1 complex; this complex is required for MHC-I internalization. Interacts (via C-terminus) with host PI3-kinase. Interacts with host PACS1; this interaction seems to be weak. Interacts with host PACS2. Interacts with host LCK and MAPK3; these interactions inhibit the kinase activity of the latter. Interacts with host ATP6V1H; this interaction may play a role in CD4 endocytosis. Associates with the CD4-Nef-AP2 complex; this complex is required for CD4 internalization. Interacts with host AP2 subunit alpha and AP2 subunit sigma2. Interacts with TCR-zeta chain; this interaction up-regulates the Fas ligand (FasL) surface expression. Interacts with host HCK, LYN, and SRC; these interactions activate the Src family kinases. Interacts with MAP3K5; this interaction inhibits the Fas and TNFR-mediated death signals. Interacts with beta-COP and PTE1. Interacts with human RACK1; this increases Nef phosphorylation by PKC. Interacts with TP53; this interaction decreases the half-life of TP53, protecting the infected cell against p53-mediated apoptosis. Post-translationally, the virion-associated Nef proteins are cleaved by the viral protease to release the soluble C-terminal core protein. Nef is probably cleaved concomitantly with viral structural proteins on maturation of virus particles. In terms of processing, myristoylated. Phosphorylated on serine residues, probably by host PKCdelta and theta.

It localises to the host cell membrane. The protein resides in the virion. Its subcellular location is the secreted. The protein localises to the host Golgi apparatus membrane. Functionally, factor of infectivity and pathogenicity, required for optimal virus replication. Alters numerous pathways of T-lymphocyte function and down-regulates immunity surface molecules in order to evade host defense and increase viral infectivity. Alters the functionality of other immunity cells, like dendritic cells, monocytes/macrophages and NK cells. Its function is as follows. In infected CD4(+) T-lymphocytes, down-regulates the surface MHC-I, mature MHC-II, CD4, CD28, CCR5 and CXCR4 molecules. Mediates internalization and degradation of host CD4 through the interaction of with the cytoplasmic tail of CD4, the recruitment of AP-2 (clathrin adapter protein complex 2), internalization through clathrin coated pits, and subsequent transport to endosomes and lysosomes for degradation. Diverts host MHC-I molecules to the trans-Golgi network-associated endosomal compartments by an endocytic pathway to finally target them for degradation. MHC-I down-regulation may involve AP-1 (clathrin adapter protein complex 1) or possibly Src family kinase-ZAP70/Syk-PI3K cascade recruited by PACS2. In consequence infected cells are masked for immune recognition by cytotoxic T-lymphocytes. Decreasing the number of immune receptors also prevents reinfection by more HIV particles (superinfection). Down-regulates host SERINC3 and SERINC5 thereby excluding these proteins from the viral particles. Virion infectivity is drastically higher when SERINC3 or SERINC5 are excluded from the viral envelope, because these host antiviral proteins impair the membrane fusion event necessary for subsequent virion penetration. Bypasses host T-cell signaling by inducing a transcriptional program nearly identical to that of anti-CD3 cell activation. Interaction with TCR-zeta chain up-regulates the Fas ligand (FasL). Increasing surface FasL molecules and decreasing surface MHC-I molecules on infected CD4(+) cells send attacking cytotoxic CD8+ T-lymphocytes into apoptosis. In terms of biological role, plays a role in optimizing the host cell environment for viral replication without causing cell death by apoptosis. Protects the infected cells from apoptosis in order to keep them alive until the next virus generation is ready to strike. Inhibits the Fas and TNFR-mediated death signals by blocking MAP3K5/ASK1. Decreases the half-life of TP53, protecting the infected cell against p53-mediated apoptosis. Inhibits the apoptotic signals regulated by the Bcl-2 family proteins through the formation of a Nef/PI3-kinase/PAK2 complex that leads to activation of PAK2 and induces phosphorylation of host BAD. Functionally, extracellular Nef protein targets CD4(+) T-lymphocytes for apoptosis by interacting with CXCR4 surface receptors. This chain is Protein Nef, found in Human immunodeficiency virus type 1 group M subtype A (isolate Z321) (HIV-1).